Consider the following 38-residue polypeptide: Lebetin-2-alpha (38 aa).

The interval 1 to 38 is disordered; it reads GDNKPPKKGPPNGCFGHKIDRIGSHSGLGCNKVDDNKG. A disulfide bond links Cys14 and Cys30.

This sequence belongs to the natriuretic peptide family. Expressed by the venom gland.

The protein localises to the secreted. Functionally, inhibits platelet aggregation induced by thrombin, collagen and PAF-acether. Human platelet aggregation induced by thrombin is inhibited by synthetic lebetin-1-alpha with (IC(50)=140 nM). In vivo, inhibits collagen-induced thrombocytopenia in rats. Is not toxic upon intravenous injection into mice and rats. In terms of biological role, inhibits platelet aggregation induced by thrombin, collagen and PAF-acether. Human platelet aggregation induced by thrombin is inhibited by synthetic lebetin-1-beta with (IC(50)=32 nM). In vivo, inhibits collagen-induced thrombocytopenia in rats. Is not toxic upon intravenous injection into mice and rats. Inhibits platelet aggregation induced by thrombin, collagen and PAF-acether. Human platelet aggregation induced by thrombin is inhibited by synthetic lebetin-1-gamma with (IC(50)=5 nM). In vivo, inhibits collagen-induced thrombocytopenia in rats. Is not toxic upon intravenous injection into mice and rats. Its function is as follows. Inhibits platelet aggregation induced by thrombin, collagen and PAF-acether. Human platelet aggregation induced by thrombin is inhibited by synthetic lebetin-1-alpha with (IC(50)=2.5 nM). In vivo, inhibits collagen-induced thrombocytopenia in rats. Is not toxic upon intravenous injection into mice and rats. Functionally, inhibits platelet aggregation induced by thrombin, collagen and PAF-acether. Human platelet aggregation induced by thrombin is inhibited by synthetic lebetin-1-alpha with (IC(50)=2.8 nM). In vivo, inhibits collagen-induced thrombocytopenia in rats. Is not toxic upon intravenous injection into mice and rats. The protein is Lebetin-2-alpha of Macrovipera lebetinus (Levantine viper).